Reading from the N-terminus, the 508-residue chain is Lysine--tRNA ligase (508 aa).

Residues Glu418 and Glu425 each contribute to the Mg(2+) site.

The protein belongs to the class-II aminoacyl-tRNA synthetase family. In terms of assembly, homodimer. The cofactor is Mg(2+).

It localises to the cytoplasm. The enzyme catalyses tRNA(Lys) + L-lysine + ATP = L-lysyl-tRNA(Lys) + AMP + diphosphate. The sequence is that of Lysine--tRNA ligase from Burkholderia mallei (strain NCTC 10247).